A 133-amino-acid chain; its full sequence is Transcription antitermination protein NusB (133 aa).

Belongs to the NusB family.

Involved in transcription antitermination. Required for transcription of ribosomal RNA (rRNA) genes. Binds specifically to the boxA antiterminator sequence of the ribosomal RNA (rrn) operons. This Clostridium novyi (strain NT) protein is Transcription antitermination protein NusB.